Reading from the N-terminus, the 219-residue chain is PKHD-type hydroxylase AM1_3707 (219 aa).

Residues 78–172 form the Fe2OG dioxygenase domain; that stretch reads SIHTLLFSRY…RLVAVGWVQS (95 aa). Fe cation is bound by residues H96, D98, and H153. R163 lines the 2-oxoglutarate pocket.

Fe(2+) serves as cofactor. The cofactor is L-ascorbate.

This chain is PKHD-type hydroxylase AM1_3707, found in Acaryochloris marina (strain MBIC 11017).